Reading from the N-terminus, the 67-residue chain is Conotoxin Cl6.6a (67 aa).

An N-terminal signal peptide occupies residues 1–24 (MKLTCVLIAAVLLLAVCQLDSADA). A propeptide spanning residues 25 to 37 (TGYMRKNPSLRSP) is cleaved from the precursor. 3 cysteine pairs are disulfide-bonded: Cys-43–Cys-57, Cys-50–Cys-61, and Cys-56–Cys-65.

Belongs to the conotoxin O1 superfamily. As to expression, expressed by the venom duct.

The protein localises to the secreted. The protein is Conotoxin Cl6.6a of Californiconus californicus (California cone).